The following is a 446-amino-acid chain: RUN domain-containing protein 3A (446 aa).

The tract at residues 1-298 (MEASFVQTTM…LQLQLEEAAA (298 aa)) is interaction with RAP2A. In terms of domain architecture, RUN spans 52 to 189 (DDSSEEFVNF…IDFSFCLKGE (138 aa)). T215 is subject to Phosphothreonine. The disordered stretch occupies residues 216–239 (DEEERHSAESSTSEDNSPEHPYLP). Phosphoserine is present on S232. Residues 267–322 (YLEELVRLRESQLKDLEAENRRLQLQLEEAAAQNQREKRELEGVILELQEQLTGLI) adopt a coiled-coil conformation. Polar residues predominate over residues 372–384 (PLSAEASLSSDSQ). The interval 372-404 (PLSAEASLSSDSQRLGEGTRDEEPWGPIGKDPT) is disordered. Phosphoserine occurs at positions 416 and 419.

It belongs to the RUNDC3 family. As to quaternary structure, interacts with the GTP-bound form of RAP2A.

Its function is as follows. May act as an effector of RAP2A in neuronal cells. This chain is RUN domain-containing protein 3A (RUNDC3A), found in Homo sapiens (Human).